The chain runs to 362 residues: Atypical chemokine receptor 3 (362 aa).

At 1–40 (MDLHLFDYAEPGNFSDISWPCNSSDCIVVDTVLCPNMPNK) the chain is on the extracellular side. Asn-13, Asn-22, and Asn-39 each carry an N-linked (GlcNAc...) asparagine glycan. The helical transmembrane segment at 41-61 (SVLLYTLSFIYIFIFVIGMIA) threads the bilayer. Residues 62 to 81 (NSVVVWVNIQAKTTGYDTHC) lie on the Cytoplasmic side of the membrane. The helical transmembrane segment at 82 to 102 (YILNLAIADLWVVVTIPVWVV) threads the bilayer. The Extracellular segment spans residues 103–118 (SLVQHNQWPMGELTCK). A disulfide bridge links Cys-117 with Cys-196. The helical transmembrane segment at 119–139 (ITHLIFSINLFGSIFFLTCMS) threads the bilayer. At 140–162 (VDRYLSITYFASTSSRRKKVVRR) the chain is on the cytoplasmic side. A helical membrane pass occupies residues 163–183 (AVCVLVWLLAFCVSLPDTYYL). Residues 184–213 (KTVTSASNNETYCRSFYPEHSVKEWLISME) lie on the Extracellular side of the membrane. A helical transmembrane segment spans residues 214–234 (LVSVVLGFAIPFCVIAVFYCL). Topologically, residues 235 to 252 (LARAISASSDQEKQSSRK) are cytoplasmic. A helical membrane pass occupies residues 253–273 (IIFSYVVVFLVCWLPYHVVVL). Topologically, residues 274 to 296 (LDIFSILHYIPFTCQLENFLFTA) are extracellular. A helical membrane pass occupies residues 297–319 (LHVTQCLSLVHCCVNPVLYSFIN). At 320–362 (RNYRYELMKAFIFKYSAKTGLTKLIDASRVSETEYSALEQNAK) the chain is on the cytoplasmic side. A C-terminal cytoplasmic tail region spans residues 324–362 (YELMKAFIFKYSAKTGLTKLIDASRVSETEYSALEQNAK). A phosphoserine mark is found at Ser-347, Ser-350, and Ser-355.

The protein belongs to the G-protein coupled receptor 1 family. Atypical chemokine receptor subfamily. Homodimer. Can form heterodimers with CXCR4; heterodimerization may regulate CXCR4 signaling activity. Interacts with ARRB1 and ARRB2. Post-translationally, the Ser/Thr residues in the C-terminal cytoplasmic tail may be phosphorylated. In terms of processing, ubiquitinated at the Lys residues in its C-terminal cytoplasmic tail and is essential for correct trafficking from and to the cell membrane. Deubiquitinated by CXCL12-stimulation in a reversible manner.

Its subcellular location is the cell membrane. The protein resides in the early endosome. It is found in the recycling endosome. Its function is as follows. Atypical chemokine receptor that controls chemokine levels and localization via high-affinity chemokine binding that is uncoupled from classic ligand-driven signal transduction cascades, resulting instead in chemokine sequestration, degradation, or transcytosis. Also known as interceptor (internalizing receptor) or chemokine-scavenging receptor or chemokine decoy receptor. Acts as a receptor for chemokines CXCL11 and CXCL12/SDF1. Chemokine binding does not activate G-protein-mediated signal transduction but instead induces beta-arrestin recruitment, leading to ligand internalization and activation of MAPK signaling pathway. Required for regulation of CXCR4 protein levels in migrating interneurons, thereby adapting their chemokine responsiveness. In glioma cells, transduces signals via MEK/ERK pathway, mediating resistance to apoptosis. Promotes cell growth and survival. Not involved in cell migration, adhesion or proliferation of normal hematopoietic progenitors but activated by CXCL11 in malignant hemapoietic cells, leading to phosphorylation of ERK1/2 (MAPK3/MAPK1) and enhanced cell adhesion and migration. Plays a regulatory role in CXCR4-mediated activation of cell surface integrins by CXCL12. Required for heart valve development. Regulates axon guidance in the oculomotor system through the regulation of CXCL12 levels. This Canis lupus familiaris (Dog) protein is Atypical chemokine receptor 3 (ACKR3).